We begin with the raw amino-acid sequence, 454 residues long: MLNIMEVHETNQMIEQEKLDVRTITMGISLLDCASDDVDKTCDNIYRKITTYAKDLVSTGKAIERDYGIPIVNKRITVTPISLVGASSCKTSEDFVKIAHALDKAAKEVGVDLIGGYSALVSKSMTPAEELLIRSLPQALSETDIVCSSVNVGSTKTGIDMNAVELLGHIIKDVAERTADNDSYGCVKFVAFCNVPDDNPFMAGGFHGVTEGDAVINVGVSGPGVVSRALDAAKGKDFEFLCETIKRTAFKITRVGQLVAQEASRRLGIPFGIIDLSLAPTPAVGDSVGEVLEKIGLEQVGAPGTTAALAMLNDQVKKGGIMASSYVGGLSGAFIPVSEDKNMIDAASSDCLTIEKLEAMTCVCSVGLDMIAIPGDTSASTISGLIADEAAIGMVNQKTTAVRVIPVAGKGVGEMANFGGLMGYAPIMPVNQTSCEAFVTRGGRIPAPIHSFKN.

It belongs to the UPF0210 family. As to quaternary structure, homodimer.

This Bifidobacterium longum (strain NCC 2705) protein is UPF0210 protein BL1209.